The chain runs to 280 residues: Diaminopimelate epimerase (280 aa).

2 residues coordinate substrate: N11 and N62. The Proton donor role is filled by C71. Substrate contacts are provided by residues 72 to 73 (GN), N160, N193, and 211 to 212 (ER). C220 (proton acceptor) is an active-site residue. 221–222 (GT) serves as a coordination point for substrate.

It belongs to the diaminopimelate epimerase family. As to quaternary structure, homodimer.

The protein localises to the cytoplasm. It carries out the reaction (2S,6S)-2,6-diaminopimelate = meso-2,6-diaminopimelate. It functions in the pathway amino-acid biosynthesis; L-lysine biosynthesis via DAP pathway; DL-2,6-diaminopimelate from LL-2,6-diaminopimelate: step 1/1. Functionally, catalyzes the stereoinversion of LL-2,6-diaminopimelate (L,L-DAP) to meso-diaminopimelate (meso-DAP), a precursor of L-lysine and an essential component of the bacterial peptidoglycan. The protein is Diaminopimelate epimerase of Acetivibrio thermocellus (strain ATCC 27405 / DSM 1237 / JCM 9322 / NBRC 103400 / NCIMB 10682 / NRRL B-4536 / VPI 7372) (Clostridium thermocellum).